The following is a 259-amino-acid chain: Hydroxyethylthiazole kinase (259 aa).

Position 37 (M37) interacts with substrate. The ATP site is built by R113 and T158. Residue G185 coordinates substrate.

It belongs to the Thz kinase family. The cofactor is Mg(2+).

It carries out the reaction 5-(2-hydroxyethyl)-4-methylthiazole + ATP = 4-methyl-5-(2-phosphooxyethyl)-thiazole + ADP + H(+). Its pathway is cofactor biosynthesis; thiamine diphosphate biosynthesis; 4-methyl-5-(2-phosphoethyl)-thiazole from 5-(2-hydroxyethyl)-4-methylthiazole: step 1/1. Its function is as follows. Catalyzes the phosphorylation of the hydroxyl group of 4-methyl-5-beta-hydroxyethylthiazole (THZ). This chain is Hydroxyethylthiazole kinase, found in Helicobacter pylori (strain Shi470).